Here is a 203-residue protein sequence, read N- to C-terminus: Cytochrome c oxidase assembly protein CtaG (203 aa).

Topologically, residues 1–19 (MDAGKAERRAGNGRRTDGR) are cytoplasmic. A helical; Signal-anchor for type II membrane protein transmembrane segment spans residues 20-42 (RHLVVAAACAAFIAAMVGVTYAS). At 43–203 (VPLYAMFCAL…AAARASGTGG (161 aa)) the chain is on the periplasmic side.

The protein belongs to the COX11/CtaG family.

It localises to the cell inner membrane. In terms of biological role, exerts its effect at some terminal stage of cytochrome c oxidase synthesis, probably by being involved in the insertion of the copper B into subunit I. The sequence is that of Cytochrome c oxidase assembly protein CtaG from Xanthobacter autotrophicus (strain ATCC BAA-1158 / Py2).